Here is a 76-residue protein sequence, read N- to C-terminus: MNRKDIKDILIKLLVIHACVTFVFAITFLMCNVEAAIILKSLSIFTKCKYFYDNIYIIFYNIFYCIKLYFINFFVF.

The protein localises to the plastid. This is an uncharacterized protein from Euglena longa (Euglenophycean alga).